The primary structure comprises 272 residues: Putative esterase/lipase 3 (272 aa).

Residue histidine 34 is part of the active site. Catalysis depends on serine 100, which acts as the Charge relay system.

It belongs to the lipase/esterase LIP3/BchO family.

The protein is Putative esterase/lipase 3 of Mycoplasma pneumoniae (strain ATCC 29342 / M129 / Subtype 1) (Mycoplasmoides pneumoniae).